An 815-amino-acid chain; its full sequence is Probable E3 ubiquitin-protein ligase hulA (815 aa).

The C2 domain maps to 1 to 112 (MGSNLPSQPN…EMGGDEMLTR (112 aa)). Disordered stretches follow at residues 134–237 (NLST…GWER) and 253–353 (RTTT…YFVD). Composition is skewed to low complexity over residues 165 to 185 (ASAA…SNPS) and 202 to 212 (APGAAAGATPT). 2 stretches are compositionally biased toward polar residues: residues 213–226 (NTQG…SFED) and 253–270 (RTTT…QTQR). Positions 229–262 (GRLPAGWERREDNLGRTYYVDHNTRTTTWTRPSS) constitute a WW 1 domain. The span at 279–294 (LERRAHQSRMLPEDRT) shows a compositional bias: basic and acidic residues. The span at 295–308 (GANSPNLPETSQQA) shows a compositional bias: polar residues. The span at 324–333 (ATGATTAGTG) shows a compositional bias: low complexity. 2 WW domains span residues 333–366 (GELP…DPRR) and 393–426 (GPLP…DPRL). In terms of domain architecture, HECT spans 482–815 (SASDLKKRLM…VEETLGFGQE (334 aa)). Residue cysteine 783 is the Glycyl thioester intermediate of the active site.

This sequence belongs to the RSP5/NEDD4 family. Interacts with creD.

Its subcellular location is the cytoplasm. The catalysed reaction is S-ubiquitinyl-[E2 ubiquitin-conjugating enzyme]-L-cysteine + [acceptor protein]-L-lysine = [E2 ubiquitin-conjugating enzyme]-L-cysteine + N(6)-ubiquitinyl-[acceptor protein]-L-lysine.. It participates in protein modification; protein ubiquitination. E3 ubiquitin-protein ligase which accepts ubiquitin from an E2 ubiquitin-conjugating enzyme in the form of a thioester and then directly transfers the ubiquitin to targeted substrates. Probably involved in the regulatory network controlling carbon source utilization. This Aspergillus clavatus (strain ATCC 1007 / CBS 513.65 / DSM 816 / NCTC 3887 / NRRL 1 / QM 1276 / 107) protein is Probable E3 ubiquitin-protein ligase hulA (hulA).